The following is a 933-amino-acid chain: 2-oxoglutarate dehydrogenase E1 component (933 aa).

This sequence belongs to the alpha-ketoglutarate dehydrogenase family. As to quaternary structure, homodimer. Part of the 2-oxoglutarate dehydrogenase (OGDH) complex composed of E1 (2-oxoglutarate dehydrogenase), E2 (dihydrolipoamide succinyltransferase) and E3 (dihydrolipoamide dehydrogenase); the complex contains multiple copies of the three enzymatic components (E1, E2 and E3). Thiamine diphosphate serves as cofactor.

It carries out the reaction N(6)-[(R)-lipoyl]-L-lysyl-[protein] + 2-oxoglutarate + H(+) = N(6)-[(R)-S(8)-succinyldihydrolipoyl]-L-lysyl-[protein] + CO2. Functionally, E1 component of the 2-oxoglutarate dehydrogenase (OGDH) complex which catalyzes the decarboxylation of 2-oxoglutarate, the first step in the conversion of 2-oxoglutarate to succinyl-CoA and CO(2). This chain is 2-oxoglutarate dehydrogenase E1 component, found in Staphylococcus saprophyticus subsp. saprophyticus (strain ATCC 15305 / DSM 20229 / NCIMB 8711 / NCTC 7292 / S-41).